Reading from the N-terminus, the 411-residue chain is Citrate synthase (411 aa).

Residues His304 and Asp363 contribute to the active site.

Belongs to the citrate synthase family.

The catalysed reaction is oxaloacetate + acetyl-CoA + H2O = citrate + CoA + H(+). It functions in the pathway carbohydrate metabolism; tricarboxylic acid cycle; isocitrate from oxaloacetate: step 1/2. The protein is Citrate synthase (gltA) of Rickettsia conorii subsp. caspia (strain A-167) (Astrakhan rickettsia).